The following is a 556-amino-acid chain: Dihydroxy-acid dehydratase (556 aa).

D78 lines the Mg(2+) pocket. [2Fe-2S] cluster is bound at residue C119. Mg(2+)-binding residues include D120 and K121. K121 is modified (N6-carboxylysine). C191 serves as a coordination point for [2Fe-2S] cluster. E442 provides a ligand contact to Mg(2+). S468 acts as the Proton acceptor in catalysis.

This sequence belongs to the IlvD/Edd family. As to quaternary structure, homodimer. It depends on [2Fe-2S] cluster as a cofactor. Requires Mg(2+) as cofactor.

The enzyme catalyses (2R)-2,3-dihydroxy-3-methylbutanoate = 3-methyl-2-oxobutanoate + H2O. It carries out the reaction (2R,3R)-2,3-dihydroxy-3-methylpentanoate = (S)-3-methyl-2-oxopentanoate + H2O. It functions in the pathway amino-acid biosynthesis; L-isoleucine biosynthesis; L-isoleucine from 2-oxobutanoate: step 3/4. It participates in amino-acid biosynthesis; L-valine biosynthesis; L-valine from pyruvate: step 3/4. Functionally, functions in the biosynthesis of branched-chain amino acids. Catalyzes the dehydration of (2R,3R)-2,3-dihydroxy-3-methylpentanoate (2,3-dihydroxy-3-methylvalerate) into 2-oxo-3-methylpentanoate (2-oxo-3-methylvalerate) and of (2R)-2,3-dihydroxy-3-methylbutanoate (2,3-dihydroxyisovalerate) into 2-oxo-3-methylbutanoate (2-oxoisovalerate), the penultimate precursor to L-isoleucine and L-valine, respectively. This chain is Dihydroxy-acid dehydratase, found in Clostridium beijerinckii (strain ATCC 51743 / NCIMB 8052) (Clostridium acetobutylicum).